A 968-amino-acid polypeptide reads, in one-letter code: RNA polymerase-associated protein RapA (968 aa).

Positions D164–N334 constitute a Helicase ATP-binding domain. D177 to T184 contributes to the ATP binding site. The DEAH box motif lies at D280–H283. The Helicase C-terminal domain occupies R490–G662.

The protein belongs to the SNF2/RAD54 helicase family. RapA subfamily. In terms of assembly, interacts with the RNAP. Has a higher affinity for the core RNAP than for the holoenzyme. Its ATPase activity is stimulated by binding to RNAP.

In terms of biological role, transcription regulator that activates transcription by stimulating RNA polymerase (RNAP) recycling in case of stress conditions such as supercoiled DNA or high salt concentrations. Probably acts by releasing the RNAP, when it is trapped or immobilized on tightly supercoiled DNA. Does not activate transcription on linear DNA. Probably not involved in DNA repair. This is RNA polymerase-associated protein RapA from Shigella sonnei (strain Ss046).